A 478-amino-acid chain; its full sequence is Argininosuccinate synthase (478 aa).

Residues 17-25 (AFSGGLDTS) and alanine 43 each bind ATP. Residue tyrosine 99 participates in L-citrulline binding. The ATP site is built by glycine 129 and threonine 131. L-aspartate contacts are provided by threonine 131, asparagine 135, and aspartate 136. An L-citrulline-binding site is contributed by asparagine 135. Aspartate 136 contacts ATP. Residues arginine 139 and serine 192 each contribute to the L-citrulline site. Aspartate 194 contacts ATP. L-citrulline-binding residues include threonine 201, glutamate 203, and glutamate 280.

The protein belongs to the argininosuccinate synthase family. Type 2 subfamily. As to quaternary structure, homotetramer.

Its subcellular location is the cytoplasm. It catalyses the reaction L-citrulline + L-aspartate + ATP = 2-(N(omega)-L-arginino)succinate + AMP + diphosphate + H(+). The protein operates within amino-acid biosynthesis; L-arginine biosynthesis; L-arginine from L-ornithine and carbamoyl phosphate: step 2/3. The protein is Argininosuccinate synthase of Leifsonia xyli subsp. xyli (strain CTCB07).